A 254-amino-acid chain; its full sequence is Very-long-chain (3R)-3-hydroxyacyl-CoA dehydratase 2 (254 aa).

Over residues 1–10 (MAAAAATAAT) the composition is skewed to low complexity. Residues 1 to 34 (MAAAAATAATKGNGGGSGRVGAGDSSGARKKKGP) form a disordered region. Alanine 2 is modified (N-acetylalanine). Residues 2-41 (AAAAATAATKGNGGGSGRVGAGDSSGARKKKGPGPVATAY) are Cytoplasmic-facing. Positions 12 to 21 (GNGGGSGRVG) are enriched in gly residues. Residues 42–60 (LVIYNVVMTAGWLVIAVGL) traverse the membrane as a helical segment. At 61-79 (VRAYLAKGSYHSLYYSIER) the chain is on the lumenal side. A helical membrane pass occupies residues 80-97 (PLKFFQTGALLEILHCAI). Residues 98–107 (GIVPSSVVLT) are Cytoplasmic-facing. The helical transmembrane segment at 108 to 125 (SFQVMSRVFLIWAVTHSV) threads the bilayer. Residues 126 to 130 (KEVQS) are Lumenal-facing. The chain crosses the membrane as a helical span at residues 131–146 (EDSVLLFVIAWTITEI). At 147 to 169 (IRYSFYTFSLLNHLPYIIKWARY) the chain is on the cytoplasmic side. A helical transmembrane segment spans residues 170 to 187 (TLFIVLYPMGVTGELLTI). Active-site residues include tyrosine 176 and glutamate 183. Residues 188-217 (YAALPFVRQAGLYSISLPNKYNFSFDYHAF) are Lumenal-facing. The segment at 198–214 (GLYSISLPNKYNFSFDY) is may be involved in interaction with TECR. Asparagine 209 carries an N-linked (GlcNAc...) asparagine glycan. A helical membrane pass occupies residues 218–235 (LILIMISYIPLFPQLYFH). The Cytoplasmic portion of the chain corresponds to 236–254 (MIHQRRKVLSHTEEHKKFE).

This sequence belongs to the very long-chain fatty acids dehydratase HACD family. In terms of assembly, may interact with enzymes of the ELO family (including ELOVL1); with those enzymes that mediate condensation, the first of the four steps of the reaction cycle responsible for fatty acids elongation, may be part of a larger fatty acids elongase complex. Interacts with BCAP31. Interacts with TECR.

Its subcellular location is the endoplasmic reticulum membrane. It catalyses the reaction a very-long-chain (3R)-3-hydroxyacyl-CoA = a very-long-chain (2E)-enoyl-CoA + H2O. The catalysed reaction is (3R)-hydroxyhexadecanoyl-CoA = (2E)-hexadecenoyl-CoA + H2O. It carries out the reaction (3R)-hydroxyoctadecanoyl-CoA = (2E)-octadecenoyl-CoA + H2O. The enzyme catalyses (3R)-hydroxyeicosanoyl-CoA = (2E)-eicosenoyl-CoA + H2O. It catalyses the reaction (3R)-hydroxydocosanoyl-CoA = (2E)-docosenoyl-CoA + H2O. The catalysed reaction is (3R)-hydroxytetracosanoyl-CoA = (2E)-tetracosenoyl-CoA + H2O. It carries out the reaction (3R)-hydroxyhexacosanoyl-CoA = (2E)-hexacosenoyl-CoA + H2O. Its pathway is lipid metabolism; fatty acid biosynthesis. Functionally, catalyzes the third of the very long-chain fatty acids (VLCFA) elongation four-step cycle (condensation, reduction, dehydration, and reduction). This endoplasmic reticulum-elongation process is characterized by the addition of two carbons to the lipid chain through each cycle. This enzyme catalyzes the dehydration of the 3-hydroxyacyl-CoA intermediate into trans-2,3-enoyl-CoA, within each cycle of elongation. Therefore, it participates in the production of various VLCFAs involved in multiple biological processes as precursors of membrane lipids and lipid mediators. The sequence is that of Very-long-chain (3R)-3-hydroxyacyl-CoA dehydratase 2 from Mus musculus (Mouse).